The primary structure comprises 33 residues: Ice-structuring protein SS-3 (33 aa).

This sequence belongs to the type-I AFP family.

In terms of biological role, antifreeze proteins lower the blood freezing point. This Myoxocephalus scorpius (Shorthorn sculpin) protein is Ice-structuring protein SS-3.